The primary structure comprises 681 residues: Sorting nexin-41 (681 aa).

Acidic residues predominate over residues 1–12; it reads MSTDNLFEDIEQ. The segment at 1–94 is disordered; that stretch reads MSTDNLFEDI…HNTSLNNGYP (94 aa). A compositionally biased stretch (polar residues) spans 13–24; it reads DNNPSFYGNPSI. Positions 113-236 constitute a PX domain; it reads NDSQLQVDII…KFFDPNYELC (124 aa). Arg151, Ser153, Lys177, and Arg200 together coordinate a 1,2-diacyl-sn-glycero-3-phospho-(1D-myo-inositol-3-phosphate). Disordered stretches follow at residues 475 to 505 and 558 to 597; these read LASRISTDNDSNNSNNSGNNNNDGDLDTENF and TATGSTEQQSQQQSAPNSPQREQQQQQSQSQSHHSHQTSI. Low complexity-rich tracts occupy residues 482–497 and 558–589; these read DNDSNNSNNSGNNNND and TATGSTEQQSQQQSAPNSPQREQQQQQSQSQS.

This sequence belongs to the sorting nexin family.

It localises to the endosome membrane. The protein resides in the endomembrane system. Functionally, may be required for cytoplasm to vacuole transport (Cvt) and pexophagy. The polypeptide is Sorting nexin-41 (SNX41) (Candida albicans (strain SC5314 / ATCC MYA-2876) (Yeast)).